We begin with the raw amino-acid sequence, 306 residues long: Agmatinase (306 aa).

Positions 126, 149, 151, 153, 230, and 232 each coordinate Mn(2+).

The protein belongs to the arginase family. Agmatinase subfamily. Requires Mn(2+) as cofactor.

It carries out the reaction agmatine + H2O = urea + putrescine. Its pathway is amine and polyamine biosynthesis; putrescine biosynthesis via agmatine pathway; putrescine from agmatine: step 1/1. In terms of biological role, catalyzes the formation of putrescine from agmatine. This Salmonella dublin (strain CT_02021853) protein is Agmatinase.